The sequence spans 299 residues: Protein sprouty homolog 4 (299 aa).

N-acetylmethionine is present on Met1. 2 disordered regions span residues 55–79 (NPSLALTTGPKRTRGGAPELAPTPA) and 92–126 (FSGRPSSVSSSSSTSSDQRLLDHMAPPPVADQASP). A compositionally biased stretch (low complexity) spans 92–107 (FSGRPSSVSSSSSTSS). At Ser125 the chain carries Phosphoserine. The region spanning 166–273 (KCKECASPRT…GYDRLRRPGC (108 aa)) is the SPR domain. A required for interaction with TESK1. Required for colocalization with TESK1 at vesicular spots in the cytoplasm and inhibition of TESK1 kinase activity, resulting in inhibition of cell spreading region spans residues 181–299 (VCNQECLCSA…AKTSRPDKPF (119 aa)).

It belongs to the sprouty family. Interacts (via C-terminus) with TESK1 (via both C- and N-termini); the interaction inhibits TESK1 kinase activity. Interacts with RAF1. Interacts with CAV1 (via C-terminus).

It localises to the cytoplasm. The protein resides in the cell projection. It is found in the ruffle membrane. Functionally, suppresses the insulin receptor and EGFR-transduced MAPK signaling pathway, but does not inhibit MAPK activation by a constitutively active mutant Ras. Probably impairs the formation of GTP-Ras. Inhibits Ras-independent, but not Ras-dependent, activation of RAF1. Represses integrin-mediated cell spreading via inhibition of TESK1-mediated phosphorylation of cofilin. This chain is Protein sprouty homolog 4 (SPRY4), found in Homo sapiens (Human).